A 174-amino-acid chain; its full sequence is Large ribosomal subunit protein uL16 (174 aa).

It belongs to the universal ribosomal protein uL16 family.

In Methanocaldococcus jannaschii (strain ATCC 43067 / DSM 2661 / JAL-1 / JCM 10045 / NBRC 100440) (Methanococcus jannaschii), this protein is Large ribosomal subunit protein uL16.